The primary structure comprises 103 residues: Phosphoribosyl-ATP pyrophosphatase (103 aa).

This sequence belongs to the PRA-PH family.

It is found in the cytoplasm. It carries out the reaction 1-(5-phospho-beta-D-ribosyl)-ATP + H2O = 1-(5-phospho-beta-D-ribosyl)-5'-AMP + diphosphate + H(+). The protein operates within amino-acid biosynthesis; L-histidine biosynthesis; L-histidine from 5-phospho-alpha-D-ribose 1-diphosphate: step 2/9. This is Phosphoribosyl-ATP pyrophosphatase from Cereibacter sphaeroides (strain ATCC 17029 / ATH 2.4.9) (Rhodobacter sphaeroides).